We begin with the raw amino-acid sequence, 394 residues long: Protein NDRG1 (394 aa).

S2 is modified (N-acetylserine). S2, S319, and S326 each carry phosphoserine. Residues 325 to 394 (RSRTASGSSV…AGPKSMEVSC (70 aa)) are disordered. The segment covering 327–339 (RTASGSSVTSLDG) has biased composition (polar residues). T328 carries the post-translational modification Phosphothreonine; by SGK1. Phosphoserine; by SGK1 is present on residues S330 and S332. S333 is subject to Phosphoserine. T335 is modified (phosphothreonine). The residue at position 336 (S336) is a Phosphoserine. 3 consecutive repeat copies span residues 339 to 348 (GTRSRSHTSE), 349 to 358 (GTRSRSHTSE), and 359 to 368 (GTRSRSHTSE). The 3 X 10 AA tandem repeats of G-T-R-S-R-S-H-T-S-E stretch occupies residues 339–368 (GTRSRSHTSEGTRSRSHTSEGTRSRSHTSE). T340 bears the Phosphothreonine mark. S342 is modified (phosphoserine). Residues 345 to 371 (HTSEGTRSRSHTSEGTRSRSHTSEGAH) are compositionally biased toward basic and acidic residues. Position 346 is a phosphothreonine; by SGK1 (T346). S352 bears the Phosphoserine mark. At T356 the chain carries Phosphothreonine; by SGK1. Position 362 is a phosphoserine (S362). The residue at position 364 (S364) is a Phosphoserine; by SGK1. T366 bears the Phosphothreonine; by SGK1 mark. At T375 the chain carries Phosphothreonine.

Belongs to the NDRG family. Interacts with RAB4A (membrane-bound form); the interaction involves NDRG1 in vesicular recycling of CDH1. Under stress conditions, phosphorylated in the C-terminal on many serine and threonine residues. Phosphorylated in vitro by PKA. Phosphorylation enhanced by increased intracellular cAMP levels. Homocysteine induces dephosphorylation. Phosphorylation by SGK1 is cell cycle dependent. As to expression, ubiquitous; expressed most prominently in placental membranes and prostate, kidney, small intestine, and ovary tissues. Also expressed in heart, brain, skeletal muscle, lung, liver and pancreas. Low levels in peripheral blood leukocytes and in tissues of the immune system. Expressed mainly in epithelial cells. Also found in Schwann cells of peripheral neurons. Reduced expression in adenocarcinomas compared to normal tissues. In colon, prostate and placental membranes, the cells that border the lumen show the highest expression.

The protein localises to the cytoplasm. The protein resides in the cytosol. It localises to the cytoskeleton. It is found in the microtubule organizing center. Its subcellular location is the centrosome. The protein localises to the nucleus. The protein resides in the cell membrane. Its function is as follows. Stress-responsive protein involved in hormone responses, cell growth, and differentiation. Acts as a tumor suppressor in many cell types. Necessary but not sufficient for p53/TP53-mediated caspase activation and apoptosis. Has a role in cell trafficking, notably of the Schwann cell, and is necessary for the maintenance and development of the peripheral nerve myelin sheath. Required for vesicular recycling of CDH1 and TF. May also function in lipid trafficking. Protects cells from spindle disruption damage. Functions in p53/TP53-dependent mitotic spindle checkpoint. Regulates microtubule dynamics and maintains euploidy. The protein is Protein NDRG1 (NDRG1) of Homo sapiens (Human).